We begin with the raw amino-acid sequence, 270 residues long: GTP cyclohydrolase FolE2 2 (270 aa).

The protein belongs to the GTP cyclohydrolase IV family.

The enzyme catalyses GTP + H2O = 7,8-dihydroneopterin 3'-triphosphate + formate + H(+). It participates in cofactor biosynthesis; 7,8-dihydroneopterin triphosphate biosynthesis; 7,8-dihydroneopterin triphosphate from GTP: step 1/1. Functionally, converts GTP to 7,8-dihydroneopterin triphosphate. This is GTP cyclohydrolase FolE2 2 from Dechloromonas aromatica (strain RCB).